Reading from the N-terminus, the 135-residue chain is Fatty acid-binding protein homolog 6 (135 aa).

A fatty acid contacts are provided by residues R110 and 130–132 (REY).

This sequence belongs to the calycin superfamily. Fatty-acid binding protein (FABP) family.

This chain is Fatty acid-binding protein homolog 6 (lbp-6), found in Caenorhabditis elegans.